We begin with the raw amino-acid sequence, 330 residues long: Probable allantoicase (330 aa).

It belongs to the allantoicase family.

It carries out the reaction allantoate + H2O = (S)-ureidoglycolate + urea. The protein operates within nitrogen metabolism; (S)-allantoin degradation; (S)-ureidoglycolate from allantoate (aminidohydrolase route): step 1/1. In Photobacterium profundum (strain SS9), this protein is Probable allantoicase.